The sequence spans 177 residues: Isopentenyl-diphosphate Delta-isomerase (177 aa).

Mn(2+) contacts are provided by His22 and His28. The region spanning Leu26–Ile160 is the Nudix hydrolase domain. The active site involves Cys62. Residue His64 participates in Mn(2+) binding. Glu82 contributes to the Mg(2+) binding site. Residues Glu108 and Glu110 each coordinate Mn(2+). The active site involves Glu110.

It belongs to the IPP isomerase type 1 family. It depends on Mg(2+) as a cofactor. Requires Mn(2+) as cofactor.

Its subcellular location is the cytoplasm. The catalysed reaction is isopentenyl diphosphate = dimethylallyl diphosphate. Its pathway is isoprenoid biosynthesis; dimethylallyl diphosphate biosynthesis; dimethylallyl diphosphate from isopentenyl diphosphate: step 1/1. It functions in the pathway porphyrin-containing compound metabolism; chlorophyll biosynthesis. Catalyzes the 1,3-allylic rearrangement of the homoallylic substrate isopentenyl (IPP) to its highly electrophilic allylic isomer, dimethylallyl diphosphate (DMAPP). In Cereibacter sphaeroides (strain ATCC 17025 / ATH 2.4.3) (Rhodobacter sphaeroides), this protein is Isopentenyl-diphosphate Delta-isomerase.